A 487-amino-acid chain; its full sequence is E3 ubiquitin-protein ligase TRIM50 (487 aa).

The RING-type zinc finger occupies 16-57 (CPICLEVFKEPLMLQCGHSYCKGCLVSLSCHLDAELRCPVCR). A B box-type zinc finger spans residues 84 to 125 (PEPKVCVHHRNPLSLFCEKDQELICGLCGLLGSHQHHPVTPV). Zn(2+) contacts are provided by Cys89, His92, Cys111, and His117. 2 coiled-coil regions span residues 125–169 (VSTV…NESD) and 204–235 (LVAS…FGNE). One can recognise a B30.2/SPRY domain in the interval 276-475 (DIKLTVWKRL…LPMVLPPPSG (200 aa)). Lys373 carries the post-translational modification N6-acetyllysine. The interval 468–487 (MVLPPPSGPGPLSPEQPTKL) is disordered. Pro residues predominate over residues 469-481 (VLPPPSGPGPLSP).

It belongs to the TRIM/RBCC family. Can form dimers and trimers. Interacts with several E2 ubiquitin-conjugating enzymes, including UBE2L6, UBE2E1, UBE2E3. No interaction with UBE2H. Interacts with BECN1. Interacts with SQSTM1. Interacts with NLRP3. Auto-ubiquitinated. In terms of processing, acetylated by EP300 and KAT2B. HDAC6 drives TRIM50 deacetylation. Acetylation antagonizes with TRIM50 ubiquitination.

Its subcellular location is the cytoplasm. It catalyses the reaction S-ubiquitinyl-[E2 ubiquitin-conjugating enzyme]-L-cysteine + [acceptor protein]-L-lysine = [E2 ubiquitin-conjugating enzyme]-L-cysteine + N(6)-ubiquitinyl-[acceptor protein]-L-lysine.. Its function is as follows. E3 ubiquitin-protein ligase that ubiquitinates Beclin-1/BECN1 in a 'Lys-63'-dependent manner enhancing its binding to ULK1. In turn, promotes starvation-induced autophagy activation. Also interacts with p62/SQSTM1 protein and thereby induces the formation and the autophagy clearance of aggresome-associated polyubiquitinated proteins through HDAC6 interaction. Also promotes NLRP3 inflammasome activation by directly inducing NLRP3 oligomerization independent of its E3 ligase function. In Homo sapiens (Human), this protein is E3 ubiquitin-protein ligase TRIM50.